A 48-amino-acid polypeptide reads, in one-letter code: AACKCDDEGPDIRTAPLTGTVDLGSCNAGWEKCASYYTIIADCCRKKK.

Cystine bridges form between Cys3–Cys43, Cys5–Cys33, and Cys26–Cys44.

It belongs to the sea anemone sodium channel inhibitory toxin family. Type II subfamily.

It localises to the secreted. The protein resides in the nematocyst. Functionally, binds specifically to voltage-gated sodium channels (Nav), thereby delaying their inactivation during signal transduction. Is highly toxic to crabs (by intrahemocoelic injection), but without effect upon mice (by intraperitoneal injection). The protein is Delta-stichotoxin-She1a of Stichodactyla helianthus (Sun anemone).